A 259-amino-acid polypeptide reads, in one-letter code: Ribonuclease HII (259 aa).

Residues 72-259 enclose the RNase H type-2 domain; the sequence is SYIAGIDEVG…PIKDMIKNKL (188 aa). D78, E79, and D170 together coordinate a divalent metal cation.

It belongs to the RNase HII family. Mn(2+) is required as a cofactor. The cofactor is Mg(2+).

It is found in the cytoplasm. The catalysed reaction is Endonucleolytic cleavage to 5'-phosphomonoester.. Its function is as follows. Endonuclease that specifically degrades the RNA of RNA-DNA hybrids. This chain is Ribonuclease HII, found in Bacillus cytotoxicus (strain DSM 22905 / CIP 110041 / 391-98 / NVH 391-98).